The following is a 171-amino-acid chain: Probable deoxyuridine 5'-triphosphate nucleotidohydrolase (171 aa).

The protein belongs to the dCTP deaminase family. Archaeal dUTPase subfamily.

The enzyme catalyses dUTP + H2O = dUMP + diphosphate + H(+). The protein operates within pyrimidine metabolism; dUMP biosynthesis; dUMP from dCTP (dUTP route): step 2/2. This enzyme is involved in nucleotide metabolism: it produces dUMP, the immediate precursor of thymidine nucleotides and it decreases the intracellular concentration of dUTP so that uracil cannot be incorporated into DNA. This is Probable deoxyuridine 5'-triphosphate nucleotidohydrolase from Methanosarcina acetivorans (strain ATCC 35395 / DSM 2834 / JCM 12185 / C2A).